We begin with the raw amino-acid sequence, 211 residues long: Glycerol-3-phosphate acyltransferase (211 aa).

A run of 5 helical transmembrane segments spans residues 10 to 30, 63 to 83, 90 to 110, 126 to 146, and 152 to 172; these read FTTW…FGLL, ALTL…IKFL, NIFI…PVWL, LGLY…LFLI, and LSAL…YPYL.

Belongs to the PlsY family. In terms of assembly, probably interacts with PlsX.

The protein localises to the cell inner membrane. The enzyme catalyses an acyl phosphate + sn-glycerol 3-phosphate = a 1-acyl-sn-glycero-3-phosphate + phosphate. It functions in the pathway lipid metabolism; phospholipid metabolism. In terms of biological role, catalyzes the transfer of an acyl group from acyl-phosphate (acyl-PO(4)) to glycerol-3-phosphate (G3P) to form lysophosphatidic acid (LPA). This enzyme utilizes acyl-phosphate as fatty acyl donor, but not acyl-CoA or acyl-ACP. In Bartonella henselae (strain ATCC 49882 / DSM 28221 / CCUG 30454 / Houston 1) (Rochalimaea henselae), this protein is Glycerol-3-phosphate acyltransferase.